The chain runs to 538 residues: Cytochrome c-552 (538 aa).

The signal sequence occupies residues 1 to 55 (MKIYLRFVWILIIILNFLLNLFITTNGVIIVNAFKKSLIVAASFASLSLFNSATA). A heme c-binding site is contributed by His133. The heme site is built by Cys161, Cys164, and Lys165. Heme c is bound by residues Cys199, Cys202, His203, Cys264, Cys267, and His268. Positions 270, 271, 316, and 318 each coordinate Ca(2+). Tyr271 contributes to the substrate binding site. His319 lines the substrate pocket. His330, Cys337, Cys340, His341, His356, Cys369, Cys372, His373, and His448 together coordinate heme c.

The protein belongs to the cytochrome c-552 family. It depends on Ca(2+) as a cofactor. Requires heme c as cofactor.

The protein localises to the periplasm. The catalysed reaction is 6 Fe(III)-[cytochrome c] + NH4(+) + 2 H2O = 6 Fe(II)-[cytochrome c] + nitrite + 8 H(+). The protein operates within nitrogen metabolism; nitrate reduction (assimilation). Its function is as follows. Catalyzes the reduction of nitrite to ammonia, consuming six electrons in the process. This Haemophilus influenzae (strain ATCC 51907 / DSM 11121 / KW20 / Rd) protein is Cytochrome c-552.